The chain runs to 267 residues: Diphthine--ammonia ligase (267 aa).

Tyr97 is subject to Phosphotyrosine.

Belongs to the Diphthine--ammonia ligase family.

The enzyme catalyses diphthine-[translation elongation factor 2] + NH4(+) + ATP = diphthamide-[translation elongation factor 2] + AMP + diphosphate + H(+). Its pathway is protein modification; peptidyl-diphthamide biosynthesis. Functionally, amidase that may catalyze the last step of diphthamide biosynthesis using ammonium and ATP. Diphthamide biosynthesis consists in the conversion of an L-histidine residue in the translation elongation factor (EEF2) to diphthamide. The chain is Diphthine--ammonia ligase from Homo sapiens (Human).